Reading from the N-terminus, the 276-residue chain is Large ribosomal subunit protein uL2 (276 aa).

Disordered stretches follow at residues 37 to 59 (QIQK…GGHK) and 225 to 276 (VMNP…RHKR). The segment covering 39–49 (QKSGRNNNGHI) has biased composition (polar residues). The span at 50–59 (TTRHKGGGHK) shows a compositional bias: basic residues.

This sequence belongs to the universal ribosomal protein uL2 family. In terms of assembly, part of the 50S ribosomal subunit. Forms a bridge to the 30S subunit in the 70S ribosome.

In terms of biological role, one of the primary rRNA binding proteins. Required for association of the 30S and 50S subunits to form the 70S ribosome, for tRNA binding and peptide bond formation. It has been suggested to have peptidyltransferase activity; this is somewhat controversial. Makes several contacts with the 16S rRNA in the 70S ribosome. This chain is Large ribosomal subunit protein uL2, found in Ralstonia pickettii (strain 12J).